A 34-amino-acid chain; its full sequence is MEVNILAVIATALFVLIPTAFLLILYVKTESAGS.

The chain crosses the membrane as a helical span at residues 5 to 25; the sequence is ILAVIATALFVLIPTAFLLIL.

This sequence belongs to the PsbM family. In terms of assembly, PSII is composed of 1 copy each of membrane proteins PsbA, PsbB, PsbC, PsbD, PsbE, PsbF, PsbH, PsbI, PsbJ, PsbK, PsbL, PsbM, PsbT, PsbX, PsbY, PsbZ, Psb30/Ycf12, at least 3 peripheral proteins of the oxygen-evolving complex and a large number of cofactors. It forms dimeric complexes.

The protein resides in the plastid. It localises to the chloroplast thylakoid membrane. In terms of biological role, one of the components of the core complex of photosystem II (PSII). PSII is a light-driven water:plastoquinone oxidoreductase that uses light energy to abstract electrons from H(2)O, generating O(2) and a proton gradient subsequently used for ATP formation. It consists of a core antenna complex that captures photons, and an electron transfer chain that converts photonic excitation into a charge separation. This subunit is found at the monomer-monomer interface. This Chaetosphaeridium globosum (Charophycean green alga) protein is Photosystem II reaction center protein M.